The following is a 681-amino-acid chain: Glycogen-binding subunit 76A (681 aa).

Disordered regions lie at residues 1 to 20, 53 to 94, 232 to 251, 285 to 391, and 405 to 435; these read MNDP…SRPP, LGSQ…DLQP, SLTE…NGHL, FADR…ASNL, and QDAT…CRPQ. Positions 59–69 are enriched in acidic residues; sequence EEGEGNAEDEP. Over residues 72 to 91 the composition is skewed to polar residues; the sequence is NGTSTNTWVNSHDSEQTVTD. Composition is skewed to basic and acidic residues over residues 237–251, 297–308, and 321–336; these read EQTK…NGHL, RVQKESSQERVP, and PSDR…RVQE. The span at 353 to 364 shows a compositional bias: polar residues; the sequence is TESISTEVTTLE. The segment covering 365–374 has biased composition (basic and acidic residues); the sequence is RSPEESRNDE. In terms of domain architecture, CBM21 spans 525-632; sequence AVREKQVSLE…NNYGANYCFQ (108 aa). T545 is modified (phosphothreonine). S547 and S549 each carry phosphoserine.

In Drosophila melanogaster (Fruit fly), this protein is Glycogen-binding subunit 76A (Gbs-76A).